We begin with the raw amino-acid sequence, 192 residues long: Imidazole glycerol phosphate synthase subunit HisH (192 aa).

The region spanning M1 to D192 is the Glutamine amidotransferase type-1 domain. C77 acts as the Nucleophile in catalysis. Catalysis depends on residues H169 and E171.

Heterodimer of HisH and HisF.

The protein localises to the cytoplasm. The enzyme catalyses 5-[(5-phospho-1-deoxy-D-ribulos-1-ylimino)methylamino]-1-(5-phospho-beta-D-ribosyl)imidazole-4-carboxamide + L-glutamine = D-erythro-1-(imidazol-4-yl)glycerol 3-phosphate + 5-amino-1-(5-phospho-beta-D-ribosyl)imidazole-4-carboxamide + L-glutamate + H(+). The catalysed reaction is L-glutamine + H2O = L-glutamate + NH4(+). The protein operates within amino-acid biosynthesis; L-histidine biosynthesis; L-histidine from 5-phospho-alpha-D-ribose 1-diphosphate: step 5/9. Functionally, IGPS catalyzes the conversion of PRFAR and glutamine to IGP, AICAR and glutamate. The HisH subunit catalyzes the hydrolysis of glutamine to glutamate and ammonia as part of the synthesis of IGP and AICAR. The resulting ammonia molecule is channeled to the active site of HisF. This is Imidazole glycerol phosphate synthase subunit HisH from Staphylococcus aureus (strain bovine RF122 / ET3-1).